The primary structure comprises 356 residues: Beta-hexosaminidase (356 aa).

Substrate is bound by residues Asp-75, Arg-83, Arg-150, and 180–181 (KH). The active-site Proton donor/acceptor is the His-193. Asp-264 functions as the Nucleophile in the catalytic mechanism.

The protein belongs to the glycosyl hydrolase 3 family. NagZ subfamily.

It is found in the cytoplasm. It catalyses the reaction Hydrolysis of terminal non-reducing N-acetyl-D-hexosamine residues in N-acetyl-beta-D-hexosaminides.. It participates in cell wall biogenesis; peptidoglycan recycling. Its function is as follows. Plays a role in peptidoglycan recycling by cleaving the terminal beta-1,4-linked N-acetylglucosamine (GlcNAc) from peptide-linked peptidoglycan fragments, giving rise to free GlcNAc, anhydro-N-acetylmuramic acid and anhydro-N-acetylmuramic acid-linked peptides. The polypeptide is Beta-hexosaminidase (Aromatoleum aromaticum (strain DSM 19018 / LMG 30748 / EbN1) (Azoarcus sp. (strain EbN1))).